Consider the following 207-residue polypeptide: uncharacterized protein (207 aa).

This sequence belongs to the IIV-6 350L family.

This is an uncharacterized protein from Invertebrate iridescent virus 6 (IIV-6).